Consider the following 337-residue polypeptide: Cytoskeleton protein RodZ (337 aa).

Residues 1–111 lie on the Cytoplasmic side of the membrane; it reads MNTEATHDQN…LGKRRKKRDG (111 aa). An HTH cro/C1-type domain is found at 19–71; the sequence is LRNAREQLGLSQQAVAERLCLKVSTVRDIEEDKAPADLASTFLRGYIRSYARL. Positions 30–49 form a DNA-binding region, H-T-H motif; sequence QQAVAERLCLKVSTVRDIEE. The chain crosses the membrane as a helical; Signal-anchor for type II membrane protein span at residues 112 to 132; that stretch reads WLMTFTWLVLFVVIGLSGAWW. At 133–337 the chain is on the periplasmic side; sequence WQDHKAQQEE…TLNAEQSPAQ (205 aa). Over residues 145-167 the composition is skewed to polar residues; the sequence is TMADQSSAELSSNSEQGQSVPLN. Positions 145 to 237 are disordered; it reads TMADQSSAEL…ATTTPDGAAP (93 aa). A compositionally biased stretch (low complexity) spans 168–207; the sequence is TSTTTDPATTSTPPASVDTTATNTQTPAVTAPAPAVDPQQ. Over residues 208-218 the composition is skewed to polar residues; the sequence is NAVVSPSQANV. Residues 219-237 show a composition bias toward low complexity; it reads DTAATPAPTATTTPDGAAP.

The protein belongs to the RodZ family.

The protein localises to the cell inner membrane. In terms of biological role, cytoskeletal protein that is involved in cell-shape control through regulation of the length of the long axis. The sequence is that of Cytoskeleton protein RodZ from Escherichia coli (strain 55989 / EAEC).